A 313-amino-acid chain; its full sequence is uncharacterized protein (313 aa).

Residue 29-61 participates in NADP(+) binding; that stretch reads ALVTGGGTGLGKAIATTFAHLGASVAIAARRLD.

This sequence belongs to the short-chain dehydrogenases/reductases (SDR) family. 2,4-dienoyl-CoA reductase subfamily.

This is an uncharacterized protein from Caenorhabditis elegans.